Here is a 310-residue protein sequence, read N- to C-terminus: Aspartate carbamoyltransferase catalytic subunit (310 aa).

Carbamoyl phosphate contacts are provided by Arg-54 and Thr-55. Lys-84 lines the L-aspartate pocket. Positions 105, 134, and 137 each coordinate carbamoyl phosphate. Residues Arg-167 and Arg-229 each contribute to the L-aspartate site. Carbamoyl phosphate contacts are provided by Leu-267 and Pro-268.

Belongs to the aspartate/ornithine carbamoyltransferase superfamily. ATCase family. In terms of assembly, heterododecamer (2C3:3R2) of six catalytic PyrB chains organized as two trimers (C3), and six regulatory PyrI chains organized as three dimers (R2).

The catalysed reaction is carbamoyl phosphate + L-aspartate = N-carbamoyl-L-aspartate + phosphate + H(+). Its pathway is pyrimidine metabolism; UMP biosynthesis via de novo pathway; (S)-dihydroorotate from bicarbonate: step 2/3. Catalyzes the condensation of carbamoyl phosphate and aspartate to form carbamoyl aspartate and inorganic phosphate, the committed step in the de novo pyrimidine nucleotide biosynthesis pathway. This Enterobacter sp. (strain 638) protein is Aspartate carbamoyltransferase catalytic subunit.